The following is a 187-amino-acid chain: MDIDPYKEFGSSYQLLNFLPLDFFPDLNALVDTATALYEEELTGREHCSPHHTAIRQALVCWDELTKLIAWMSSNITSEQVRTIIVNHVNDTWGLKVRQSLWFHLSCLTFGQHTVQEFLVSFVVWIRTPAPYRPPNAPILSTLPEHTVIRRGGARASRSPRRRTPSPRRRRSQSPRRRRSQSPSANC.

Residues arginine 150 to cysteine 187 are disordered. The segment covering arginine 158–serine 180 has biased composition (basic residues). Phosphoserine; by host is present on residues serine 159, serine 166, and serine 174. The stretch at serine 159–proline 165 is one 1; half-length repeat. Residues serine 159 to glutamine 181 are 3 X 8 AA repeats of S-P-R-R-R-[PR]-S-Q. Residues arginine 162–arginine 179 carry the Bipartite nuclear localization signal motif. Repeat copies occupy residues serine 166 to glutamine 173 and serine 174 to glutamine 181. Residues glutamine 181 to cysteine 187 form an RNA binding region.

The protein belongs to the orthohepadnavirus core antigen family. In terms of assembly, homodimerizes, then multimerizes. Interacts with cytosol exposed regions of viral L glycoprotein present in the reticulum-to-Golgi compartment. Interacts with human FLNB. Phosphorylated form interacts with host importin alpha; this interaction depends on the exposure of the NLS, which itself depends upon genome maturation and/or phosphorylation of the capsid protein. Interacts with host NUP153. In terms of processing, phosphorylated by host SRPK1, SRPK2, and maybe protein kinase C or GAPDH. Phosphorylation is critical for pregenomic RNA packaging. Protein kinase C phosphorylation is stimulated by HBx protein and may play a role in transport of the viral genome to the nucleus at the late step during the viral replication cycle.

The protein resides in the virion. It localises to the host cytoplasm. Its function is as follows. Self assembles to form an icosahedral capsid. Most capsids appear to be large particles with an icosahedral symmetry of T=4 and consist of 240 copies of capsid protein, though a fraction forms smaller T=3 particles consisting of 180 capsid proteins. Entering capsids are transported along microtubules to the nucleus. Phosphorylation of the capsid is thought to induce exposure of nuclear localization signal in the C-terminal portion of the capsid protein that allows binding to the nuclear pore complex via the importin (karyopherin-) alpha and beta. Capsids are imported in intact form through the nuclear pore into the nuclear basket, where it probably binds NUP153. Only capsids that contain the mature viral genome can release the viral DNA and capsid protein into the nucleoplasm. Immature capsids get stuck in the basket. Capsids encapsulate the pre-genomic RNA and the P protein. Pre-genomic RNA is reverse-transcribed into DNA while the capsid is still in the cytoplasm. The capsid can then either be directed to the nucleus, providing more genomes for transcription, or bud through the endoplasmic reticulum to provide new virions. The sequence is that of Capsid protein from Marmota monax (Woodchuck).